A 126-amino-acid polypeptide reads, in one-letter code: Pancreatic polypeptide prohormone (126 aa).

The N-terminal stretch at 1–26 is a signal peptide; that stretch reads MTATRCCLWLLLLGTCMALLLPEAWG. Y62 bears the Tyrosine amide mark. The tract at residues 77–126 is disordered; that stretch reads RQSHAAAPGGSHRHPPAGLPAAKGGTGVSGSPPKPWDCLPCRAHSLPSQS.

It belongs to the NPY family. No icosapeptide-like peptide is cleaved from the C-terminal.

It localises to the secreted. Hormone secreted by pancreatic cells that acts as a regulator of pancreatic and gastrointestinal functions probably by signaling through the G protein-coupled receptor NPY4R2. In Cavia porcellus (Guinea pig), this protein is Pancreatic polypeptide prohormone (PPY).